The chain runs to 99 residues: Putative UPF0320 protein YDR543C (99 aa).

The tract at residues 80–99 (EKSPPKSPKHKNILSFNNNT) is disordered.

The protein belongs to the UPF0320 family.

This is Putative UPF0320 protein YDR543C from Saccharomyces cerevisiae (strain ATCC 204508 / S288c) (Baker's yeast).